The primary structure comprises 142 residues: Aspartate 1-decarboxylase (142 aa).

The active-site Schiff-base intermediate with substrate; via pyruvic acid is S25. A Pyruvic acid (Ser) modification is found at S25. T57 serves as a coordination point for substrate. The active-site Proton donor is the Y58. 73–75 is a substrate binding site; the sequence is GAA.

It belongs to the PanD family. As to quaternary structure, heterooctamer of four alpha and four beta subunits. The cofactor is pyruvate. Is synthesized initially as an inactive proenzyme, which is activated by self-cleavage at a specific serine bond to produce a beta-subunit with a hydroxyl group at its C-terminus and an alpha-subunit with a pyruvoyl group at its N-terminus.

It is found in the cytoplasm. It catalyses the reaction L-aspartate + H(+) = beta-alanine + CO2. It functions in the pathway cofactor biosynthesis; (R)-pantothenate biosynthesis; beta-alanine from L-aspartate: step 1/1. Its function is as follows. Catalyzes the pyruvoyl-dependent decarboxylation of aspartate to produce beta-alanine. The sequence is that of Aspartate 1-decarboxylase from Mycobacterium leprae (strain Br4923).